A 500-amino-acid polypeptide reads, in one-letter code: E3 ubiquitin-protein ligase TRIM69 (500 aa).

Residues 1 to 152 (MEVSTNPSSN…SVGQSKEFLQ (152 aa)) are necessary for nuclear localization. The RING-type zinc finger occupies 41–82 (CPLCNDWFRDPLMLSCGHNFCEACIQDFWRLQAKETFCPECK). Residues 161–255 (TEELAIQQGQ…QCLLAKDMLV (95 aa)) adopt a coiled-coil conformation. Residues 305-500 (PIQYMVWREM…KEPLHILHPQ (196 aa)) form the B30.2/SPRY domain. Ser341 is modified (phosphoserine).

Belongs to the TRIM/RBCC family. In terms of assembly, homo-multimer; required for antiviral activity. Interacts with PML. Phosphorylated. Phosphorylation is necessary for nuclear localization.

Its subcellular location is the cytoplasm. It localises to the nucleus. The protein localises to the nucleus speckle. The protein resides in the cytoskeleton. It is found in the microtubule organizing center. Its subcellular location is the centrosome. The catalysed reaction is S-ubiquitinyl-[E2 ubiquitin-conjugating enzyme]-L-cysteine + [acceptor protein]-L-lysine = [E2 ubiquitin-conjugating enzyme]-L-cysteine + N(6)-ubiquitinyl-[acceptor protein]-L-lysine.. It functions in the pathway protein modification; protein ubiquitination. Its function is as follows. E3 ubiquitin ligase that plays an important role in antiviral immunity by restricting different viral infections including dengue virus or vesicular stomatitis indiana virus. Ubiquitinates viral proteins such as dengue virus NS3 thereby limiting infection. In addition, acts as a key mediator of type I interferon induced microtubule stabilization by directly associating to microtubules independently of its E3 ligase activity. Also plays a role in cataract formation together with TP53. Mechanistically, inhibits UVB-induced cell apoptosis and reactive oxygen species (ROS) production by inducing TP53 ubiquitination. Regulates centrosome dynamics and mitotic progression by ubiquitinating STK3/MST2; leading to its redistribution to the perinuclear cytoskeleton and subsequent phosphorylation by PLK1. The protein is E3 ubiquitin-protein ligase TRIM69 (TRIM69) of Homo sapiens (Human).